Consider the following 175-residue polypeptide: Peptide deformylase (175 aa).

Cysteine 94 and histidine 136 together coordinate Fe cation. The active site involves glutamate 137. Residue histidine 140 coordinates Fe cation.

The protein belongs to the polypeptide deformylase family. It depends on Fe(2+) as a cofactor.

The catalysed reaction is N-terminal N-formyl-L-methionyl-[peptide] + H2O = N-terminal L-methionyl-[peptide] + formate. Its function is as follows. Removes the formyl group from the N-terminal Met of newly synthesized proteins. Requires at least a dipeptide for an efficient rate of reaction. N-terminal L-methionine is a prerequisite for activity but the enzyme has broad specificity at other positions. The sequence is that of Peptide deformylase from Brucella suis biovar 1 (strain 1330).